Reading from the N-terminus, the 251-residue chain is Small ribosomal subunit protein uS3 (251 aa).

The KH type-2 domain occupies 39 to 109 (IRNYVQARLK…EVKIDVIEVI (71 aa)). Residues 222–239 (LKKIKDRRGEQRSRGRDS) are compositionally biased toward basic and acidic residues. Residues 222-251 (LKKIKDRRGEQRSRGRDSRNRRRRKPRQTT) form a disordered region. The segment covering 240–251 (RNRRRRKPRQTT) has biased composition (basic residues).

This sequence belongs to the universal ribosomal protein uS3 family. In terms of assembly, part of the 30S ribosomal subunit. Forms a tight complex with proteins S10 and S14.

Functionally, binds the lower part of the 30S subunit head. Binds mRNA in the 70S ribosome, positioning it for translation. This Prosthecochloris aestuarii (strain DSM 271 / SK 413) protein is Small ribosomal subunit protein uS3.